Consider the following 299-residue polypeptide: Nucleotide-binding protein SCO1952 (299 aa).

Residue 23-30 (GMSGAGRS) coordinates ATP. Residue 74 to 77 (DVRG) coordinates GTP.

It belongs to the RapZ-like family.

Its function is as follows. Displays ATPase and GTPase activities. The polypeptide is Nucleotide-binding protein SCO1952 (Streptomyces coelicolor (strain ATCC BAA-471 / A3(2) / M145)).